Reading from the N-terminus, the 37-residue chain is Cytochrome b6-f complex subunit 5 (37 aa).

A helical membrane pass occupies residues 5–25 (LLCGIVLGLVPVTIAGLFVTA).

This sequence belongs to the PetG family. The 4 large subunits of the cytochrome b6-f complex are cytochrome b6, subunit IV (17 kDa polypeptide, PetD), cytochrome f and the Rieske protein, while the 4 small subunits are PetG, PetL, PetM and PetN. The complex functions as a dimer.

It localises to the plastid. The protein localises to the chloroplast thylakoid membrane. Functionally, component of the cytochrome b6-f complex, which mediates electron transfer between photosystem II (PSII) and photosystem I (PSI), cyclic electron flow around PSI, and state transitions. PetG is required for either the stability or assembly of the cytochrome b6-f complex. The sequence is that of Cytochrome b6-f complex subunit 5 from Chlamydomonas reinhardtii (Chlamydomonas smithii).